Reading from the N-terminus, the 356-residue chain is Chorismate synthase (356 aa).

Residue arginine 46 participates in NADP(+) binding. FMN contacts are provided by residues 122 to 124 (RSS), 234 to 235 (NG), glycine 274, 289 to 293 (KPTPS), and arginine 315.

The protein belongs to the chorismate synthase family. As to quaternary structure, homotetramer. The cofactor is FMNH2.

The enzyme catalyses 5-O-(1-carboxyvinyl)-3-phosphoshikimate = chorismate + phosphate. Its pathway is metabolic intermediate biosynthesis; chorismate biosynthesis; chorismate from D-erythrose 4-phosphate and phosphoenolpyruvate: step 7/7. Catalyzes the anti-1,4-elimination of the C-3 phosphate and the C-6 proR hydrogen from 5-enolpyruvylshikimate-3-phosphate (EPSP) to yield chorismate, which is the branch point compound that serves as the starting substrate for the three terminal pathways of aromatic amino acid biosynthesis. This reaction introduces a second double bond into the aromatic ring system. This chain is Chorismate synthase, found in Campylobacter fetus subsp. fetus (strain 82-40).